Consider the following 272-residue polypeptide: Protein FAM210A (272 aa).

A DUF1279 domain is found at 117–229; that stretch reads DKSISLYQRF…GYMSTPPPVK (113 aa). The chain crosses the membrane as a helical span at residues 136–156; it reads VLIPVHLITSGVWFGTFYYAA. Positions 229–271 form a coiled coil; sequence KEYLQDRMEETKELITEKMEETKDRLTEKLQETKEKVSFKKKV. The segment at 246-272 is disordered; that stretch reads KMEETKDRLTEKLQETKEKVSFKKKVE.

The protein belongs to the FAM210 family. In terms of assembly, interacts with ATAD3A.

Its subcellular location is the membrane. The protein resides in the mitochondrion. It localises to the cytoplasm. Functionally, may play a role in the structure and strength of both muscle and bone. The sequence is that of Protein FAM210A (FAM210A) from Pongo abelii (Sumatran orangutan).